Consider the following 74-residue polypeptide: Cytochrome c oxidase subunit 2 (74 aa).

Topologically, residues 1–14 (MAHPMQLGFQDAAS) are mitochondrial intermembrane. The helical transmembrane segment at 15–45 (PVMEELLHFHDHALMIVFLISTAVLYIIVVT) threads the bilayer. The Mitochondrial matrix segment spans residues 46–74 (VTTKLTDKYVLDAQEIEMVWTIMPAVVLI).

Belongs to the cytochrome c oxidase subunit 2 family. In terms of assembly, component of the cytochrome c oxidase (complex IV, CIV), a multisubunit enzyme composed of 14 subunits. The complex is composed of a catalytic core of 3 subunits MT-CO1, MT-CO2 and MT-CO3, encoded in the mitochondrial DNA, and 11 supernumerary subunits COX4I, COX5A, COX5B, COX6A, COX6B, COX6C, COX7A, COX7B, COX7C, COX8 and NDUFA4, which are encoded in the nuclear genome. The complex exists as a monomer or a dimer and forms supercomplexes (SCs) in the inner mitochondrial membrane with NADH-ubiquinone oxidoreductase (complex I, CI) and ubiquinol-cytochrome c oxidoreductase (cytochrome b-c1 complex, complex III, CIII), resulting in different assemblies (supercomplex SCI(1)III(2)IV(1) and megacomplex MCI(2)III(2)IV(2)). Found in a complex with TMEM177, COA6, COX18, COX20, SCO1 and SCO2. Interacts with TMEM177 in a COX20-dependent manner. Interacts with COX20. Interacts with COX16. Cu cation serves as cofactor.

Its subcellular location is the mitochondrion inner membrane. The catalysed reaction is 4 Fe(II)-[cytochrome c] + O2 + 8 H(+)(in) = 4 Fe(III)-[cytochrome c] + 2 H2O + 4 H(+)(out). Component of the cytochrome c oxidase, the last enzyme in the mitochondrial electron transport chain which drives oxidative phosphorylation. The respiratory chain contains 3 multisubunit complexes succinate dehydrogenase (complex II, CII), ubiquinol-cytochrome c oxidoreductase (cytochrome b-c1 complex, complex III, CIII) and cytochrome c oxidase (complex IV, CIV), that cooperate to transfer electrons derived from NADH and succinate to molecular oxygen, creating an electrochemical gradient over the inner membrane that drives transmembrane transport and the ATP synthase. Cytochrome c oxidase is the component of the respiratory chain that catalyzes the reduction of oxygen to water. Electrons originating from reduced cytochrome c in the intermembrane space (IMS) are transferred via the dinuclear copper A center (CU(A)) of subunit 2 and heme A of subunit 1 to the active site in subunit 1, a binuclear center (BNC) formed by heme A3 and copper B (CU(B)). The BNC reduces molecular oxygen to 2 water molecules using 4 electrons from cytochrome c in the IMS and 4 protons from the mitochondrial matrix. The chain is Cytochrome c oxidase subunit 2 (mt-co2) from Amia calva (Bowfin).